A 578-amino-acid polypeptide reads, in one-letter code: Serine/threonine-protein kinase D6PKL3 (578 aa).

The segment covering 1 to 24 has biased composition (low complexity); it reads MDSSSSVVYVGSSSKSRNFQSKSK. The disordered stretch occupies residues 1 to 64; the sequence is MDSSSSVVYV…EVIESSVSSV (64 aa). A compositionally biased stretch (polar residues) spans 25 to 34; the sequence is GSITSFSIDS. Positions 53 to 64 are enriched in low complexity; sequence SPEVIESSVSSV. A Protein kinase domain is found at 182–516; it reads FKLIKKLGGG…ATEIKQHPFF (335 aa). ATP-binding positions include 188-196 and Lys211; that span reads LGGGDIGNV. Asp307 serves as the catalytic Proton acceptor. The activation loop stretch occupies residues 325-426; it reads DFDLSLRCAV…VGTHEYLAPE (102 aa). The PIF motif lies at 575-578; that stretch reads IDFF.

Belongs to the protein kinase superfamily. AGC Ser/Thr protein kinase family. In terms of tissue distribution, expressed predominantly in root tissue with lower levels found in leaf, stem, seed and flower.

It localises to the cell membrane. The catalysed reaction is L-seryl-[protein] + ATP = O-phospho-L-seryl-[protein] + ADP + H(+). It carries out the reaction L-threonyl-[protein] + ATP = O-phospho-L-threonyl-[protein] + ADP + H(+). Protein kinase that regulates the auxin transport activity of PIN auxin efflux facilitators by direct phosphorylation. D6PK-mediated PIN phosphorylation promotes auxin transport in the hypocotyl and this is a prerequisite for PHOT1-dependent hypocotyl bending. This chain is Serine/threonine-protein kinase D6PKL3 (D6PKL3), found in Arabidopsis thaliana (Mouse-ear cress).